A 360-amino-acid polypeptide reads, in one-letter code: Phospho-N-acetylmuramoyl-pentapeptide-transferase (360 aa).

10 helical membrane-spanning segments follow: residues 27–47 (GALI…INSL), 71–91 (TPTM…LLWA), 93–113 (LSSI…SIGF), 134–154 (LGLE…NGQA), 168–188 (FIIN…VGAG), 199–219 (GLAI…AYLS), 239–259 (LAVV…FNAP), 262–282 (AIFM…TVAV), 288–308 (IVLV…IIQV), and 337–357 (QVVI…LSTL).

The protein belongs to the glycosyltransferase 4 family. MraY subfamily. Mg(2+) is required as a cofactor.

Its subcellular location is the cell inner membrane. The catalysed reaction is UDP-N-acetyl-alpha-D-muramoyl-L-alanyl-gamma-D-glutamyl-meso-2,6-diaminopimeloyl-D-alanyl-D-alanine + di-trans,octa-cis-undecaprenyl phosphate = di-trans,octa-cis-undecaprenyl diphospho-N-acetyl-alpha-D-muramoyl-L-alanyl-D-glutamyl-meso-2,6-diaminopimeloyl-D-alanyl-D-alanine + UMP. Its pathway is cell wall biogenesis; peptidoglycan biosynthesis. In terms of biological role, catalyzes the initial step of the lipid cycle reactions in the biosynthesis of the cell wall peptidoglycan: transfers peptidoglycan precursor phospho-MurNAc-pentapeptide from UDP-MurNAc-pentapeptide onto the lipid carrier undecaprenyl phosphate, yielding undecaprenyl-pyrophosphoryl-MurNAc-pentapeptide, known as lipid I. In Mesorhizobium japonicum (strain LMG 29417 / CECT 9101 / MAFF 303099) (Mesorhizobium loti (strain MAFF 303099)), this protein is Phospho-N-acetylmuramoyl-pentapeptide-transferase.